A 223-amino-acid chain; its full sequence is Putative C-type lectin protein 51 (223 aa).

The first 31 residues, 1 to 31 (MAKRINFTSCLIFTSCFTAFIVSLCLLVSSC), serve as a signal peptide directing secretion. The C-type lectin domain maps to 111 to 218 (QEGRCYHYSR…CDTPRRCLCG (108 aa)). A disulfide bond links C193 and C209.

The protein is Putative C-type lectin protein 51 (51) of Equine herpesvirus 2 (strain 86/87) (EHV-2).